A 167-amino-acid polypeptide reads, in one-letter code: SsrA-binding protein (167 aa).

It belongs to the SmpB family.

It is found in the cytoplasm. Functionally, required for rescue of stalled ribosomes mediated by trans-translation. Binds to transfer-messenger RNA (tmRNA), required for stable association of tmRNA with ribosomes. tmRNA and SmpB together mimic tRNA shape, replacing the anticodon stem-loop with SmpB. tmRNA is encoded by the ssrA gene; the 2 termini fold to resemble tRNA(Ala) and it encodes a 'tag peptide', a short internal open reading frame. During trans-translation Ala-aminoacylated tmRNA acts like a tRNA, entering the A-site of stalled ribosomes, displacing the stalled mRNA. The ribosome then switches to translate the ORF on the tmRNA; the nascent peptide is terminated with the 'tag peptide' encoded by the tmRNA and targeted for degradation. The ribosome is freed to recommence translation, which seems to be the essential function of trans-translation. This chain is SsrA-binding protein, found in Stenotrophomonas maltophilia (strain R551-3).